The following is a 396-amino-acid chain: Protein TOC75-4, chloroplastic (396 aa).

At 1 to 23 (MEAVKEAVRKIKSLVIPHADEKD) the chain is on the chloroplast intermembrane side. Residues 24–32 (NGIVFEIKL) traverse the membrane as a beta stranded segment. Over 33 to 87 (NETDQRVEKWGLDPSLDFFEVTGNCNLGRPNSEGSNQSLMGSVTIRNIFNPKLDD) the chain is Cytoplasmic. A beta stranded transmembrane segment spans residues 88–96 (LLSKIEYVR). The Chloroplast intermembrane segment spans residues 97 to 140 (FLEAVKKPRNRTFKTSFFNSRKLSPVFTGGPGYEDLVPPMFVGR). Residues 141–148 (DCLKATIT) traverse the membrane as a beta stranded segment. The Cytoplasmic portion of the chain corresponds to 149–156 (ENLTRQRE). A beta stranded membrane pass occupies residues 157–164 (LTYGVMFE). The Chloroplast intermembrane segment spans residues 165-271 (EIITRDENRR…VEEGSDKPQP (107 aa)). Residues 272-280 (PVLVLHGRY) form a beta stranded membrane-spanning segment. The Cytoplasmic portion of the chain corresponds to 281–292 (GGCIGDLPSYDV). A beta stranded transmembrane segment spans residues 293 to 301 (FALGGPNSV). Topologically, residues 302–363 (RGYSMGELGA…LYRKMGHGSS (62 aa)) are chloroplast intermembrane. A beta stranded membrane pass occupies residues 364 to 370 (YGLGVKL). Over 371–384 (GMVRAEYTVRHNRG) the chain is Cytoplasmic. Residues 385-392 (TGALFLRF) form a beta stranded membrane-spanning segment. Residues 393-396 (GERY) are Chloroplast intermembrane-facing.

It belongs to the TOC75 family. In terms of assembly, part of the TOC core complex that includes a protein for the specific recognition of transit peptides surrounded by a ring composed of four proteins forming translocation channels, and four to five GTP-binding proteins providing energy. This core complex can interact with components of the TIC complex to form a larger import complex. Chloroplastic protein precursors also interacts with these complexes. In terms of tissue distribution, expressed ubiquitously at low levels.

It is found in the plastid. The protein resides in the chloroplast outer membrane. Functionally, mediates the insertion of proteins targeted to the outer membrane of chloroplasts. Required for the import of protein precursors into chloroplasts. Forms the voltage-dependent preprotein translocation channels (hydrophilic beta barrel) of the TOC complex in the chloroplastic outer membrane. Required for etioplast formation and/or etioplast-chloroplast transition during deetiolation. This is Protein TOC75-4, chloroplastic (TOC75-4) from Arabidopsis thaliana (Mouse-ear cress).